The sequence spans 215 residues: MOB kinase activator-like 1B (215 aa).

The segment at 1 to 25 (MSLFGLGRNQKTFRPKKSAPSGTKG) is disordered. Residues Cys79, Cys84, His161, and His166 each contribute to the Zn(2+) site.

This sequence belongs to the MOB1/phocein family. Interacts with SIK1. As to expression, expression is detected along the vasculature in cotyledons, hypocotyls and roots of 3- to 4-day-old seedlings.

The sequence is that of MOB kinase activator-like 1B from Arabidopsis thaliana (Mouse-ear cress).